Reading from the N-terminus, the 312-residue chain is Glyoxylate/hydroxypyruvate reductase A (312 aa).

Residue R227 is part of the active site. H275 (proton donor) is an active-site residue.

The protein belongs to the D-isomer specific 2-hydroxyacid dehydrogenase family. GhrA subfamily.

Its subcellular location is the cytoplasm. The enzyme catalyses glycolate + NADP(+) = glyoxylate + NADPH + H(+). It catalyses the reaction (R)-glycerate + NAD(+) = 3-hydroxypyruvate + NADH + H(+). It carries out the reaction (R)-glycerate + NADP(+) = 3-hydroxypyruvate + NADPH + H(+). Its function is as follows. Catalyzes the NADPH-dependent reduction of glyoxylate and hydroxypyruvate into glycolate and glycerate, respectively. This Escherichia coli (strain SMS-3-5 / SECEC) protein is Glyoxylate/hydroxypyruvate reductase A.